The primary structure comprises 324 residues: Archaeosine synthase subunit beta (324 aa).

The region spanning Gly12–Asn254 is the Radical SAM core domain. Residues Cys27, Cys36, and Cys39 each coordinate [4Fe-4S] cluster.

The protein belongs to the radical SAM superfamily. RaSEA family. As to quaternary structure, forms a robust complex with the archaeosine synthase alpha subunit ArcS, likely an alpha(2)beta(2) heterotetrameric structure. The cofactor is [4Fe-4S] cluster.

It catalyses the reaction 7-N-[(5S)-5-amino-5-carboxypentyl]formamidino-7-deazaguanosine(15) in tRNA + S-adenosyl-L-methionine = archaeosine(15) in tRNA + L-1-piperideine-6-carboxylate + 5'-deoxyadenosine + L-methionine + 2 H(+). It functions in the pathway tRNA modification; archaeosine-tRNA biosynthesis. Its function is as follows. Radical SAM enzyme involved in the synthesis of archaeosine, a modified nucleoside present in the dihydrouridine loop (D-loop) of archaeal tRNAs. Catalyzes the cleavage of the C(epsilon)-N bond of the lysine moiety of q0kN15-tRNA, leading to the formation of archaeosine at position 15 in tRNAs. The chain is Archaeosine synthase subunit beta from Thermococcus kodakarensis (strain ATCC BAA-918 / JCM 12380 / KOD1) (Pyrococcus kodakaraensis (strain KOD1)).